The primary structure comprises 317 residues: Transaldolase (317 aa).

Lys-131 serves as the catalytic Schiff-base intermediate with substrate.

Belongs to the transaldolase family. Type 1 subfamily. As to quaternary structure, homodimer.

The protein resides in the cytoplasm. It carries out the reaction D-sedoheptulose 7-phosphate + D-glyceraldehyde 3-phosphate = D-erythrose 4-phosphate + beta-D-fructose 6-phosphate. It functions in the pathway carbohydrate degradation; pentose phosphate pathway; D-glyceraldehyde 3-phosphate and beta-D-fructose 6-phosphate from D-ribose 5-phosphate and D-xylulose 5-phosphate (non-oxidative stage): step 2/3. Transaldolase is important for the balance of metabolites in the pentose-phosphate pathway. This Baumannia cicadellinicola subsp. Homalodisca coagulata protein is Transaldolase.